Here is a 315-residue protein sequence, read N- to C-terminus: UDP-3-O-acyl-N-acetylglucosamine deacetylase (315 aa).

3 residues coordinate Zn(2+): histidine 78, histidine 235, and aspartate 239. The active-site Proton donor is histidine 262.

Belongs to the LpxC family. The cofactor is Zn(2+).

It catalyses the reaction a UDP-3-O-[(3R)-3-hydroxyacyl]-N-acetyl-alpha-D-glucosamine + H2O = a UDP-3-O-[(3R)-3-hydroxyacyl]-alpha-D-glucosamine + acetate. Its pathway is glycolipid biosynthesis; lipid IV(A) biosynthesis; lipid IV(A) from (3R)-3-hydroxytetradecanoyl-[acyl-carrier-protein] and UDP-N-acetyl-alpha-D-glucosamine: step 2/6. In terms of biological role, catalyzes the hydrolysis of UDP-3-O-myristoyl-N-acetylglucosamine to form UDP-3-O-myristoylglucosamine and acetate, the committed step in lipid A biosynthesis. This Syntrophus aciditrophicus (strain SB) protein is UDP-3-O-acyl-N-acetylglucosamine deacetylase.